The primary structure comprises 365 residues: Formamidopyrimidine-DNA glycosylase (365 aa).

Pro2 (schiff-base intermediate with DNA) is an active-site residue. The Proton donor role is filled by Glu3. The active-site Proton donor; for beta-elimination activity is the Lys61. The disordered stretch occupies residues 121–150 (RGRLAGHGDGMDGTSRTGSTLPGTGGTENS). Residues 134-150 (TSRTGSTLPGTGGTENS) are compositionally biased toward polar residues. DNA contacts are provided by His186, Arg205, and Arg246. The segment at 331-365 (RVYGRGGQPCRHCGTTLATAQVAGRTTVFCPQCQR) adopts an FPG-type zinc-finger fold. Arg355 functions as the Proton donor; for delta-elimination activity in the catalytic mechanism.

This sequence belongs to the FPG family. Monomer. Zn(2+) is required as a cofactor.

The enzyme catalyses Hydrolysis of DNA containing ring-opened 7-methylguanine residues, releasing 2,6-diamino-4-hydroxy-5-(N-methyl)formamidopyrimidine.. It catalyses the reaction 2'-deoxyribonucleotide-(2'-deoxyribose 5'-phosphate)-2'-deoxyribonucleotide-DNA = a 3'-end 2'-deoxyribonucleotide-(2,3-dehydro-2,3-deoxyribose 5'-phosphate)-DNA + a 5'-end 5'-phospho-2'-deoxyribonucleoside-DNA + H(+). Involved in base excision repair of DNA damaged by oxidation or by mutagenic agents. Acts as a DNA glycosylase that recognizes and removes damaged bases. Has a preference for oxidized purines, such as 7,8-dihydro-8-oxoguanine (8-oxoG). Has AP (apurinic/apyrimidinic) lyase activity and introduces nicks in the DNA strand. Cleaves the DNA backbone by beta-delta elimination to generate a single-strand break at the site of the removed base with both 3'- and 5'-phosphates. This chain is Formamidopyrimidine-DNA glycosylase, found in Nitratidesulfovibrio vulgaris (strain ATCC 29579 / DSM 644 / CCUG 34227 / NCIMB 8303 / VKM B-1760 / Hildenborough) (Desulfovibrio vulgaris).